The following is a 224-amino-acid chain: 7-cyano-7-deazaguanine synthase (224 aa).

An ATP-binding site is contributed by 9–19 (LSGGLDSATVL). C189, C199, C202, and C205 together coordinate Zn(2+).

This sequence belongs to the QueC family. Zn(2+) serves as cofactor.

The catalysed reaction is 7-carboxy-7-deazaguanine + NH4(+) + ATP = 7-cyano-7-deazaguanine + ADP + phosphate + H2O + H(+). Its pathway is purine metabolism; 7-cyano-7-deazaguanine biosynthesis. Functionally, catalyzes the ATP-dependent conversion of 7-carboxy-7-deazaguanine (CDG) to 7-cyano-7-deazaguanine (preQ(0)). The sequence is that of 7-cyano-7-deazaguanine synthase from Ralstonia nicotianae (strain ATCC BAA-1114 / GMI1000) (Ralstonia solanacearum).